Reading from the N-terminus, the 348-residue chain is UPF0324 membrane protein BPP3732 (348 aa).

Transmembrane regions (helical) follow at residues 20-39, 43-62, 98-120, 135-157, 164-186, 196-215, 235-257, 267-286, 299-318, and 322-344; these read GILF…DLPF, FGFS…GNFL, IAAV…LLIG, AMLT…EPTL, SAVA…PVIY, QALG…VVGA, VALL…AAGA, VPWF…LDIL, VFVL…FAQI, and GPRV…YGIV.

The protein belongs to the UPF0324 family.

It is found in the cell membrane. The sequence is that of UPF0324 membrane protein BPP3732 from Bordetella parapertussis (strain 12822 / ATCC BAA-587 / NCTC 13253).